We begin with the raw amino-acid sequence, 812 residues long: Leucine-rich repeat-containing protein 41 (812 aa).

The tract at residues alanine 45 to valine 54 is interaction with Elongin BC complex. Serine 155, serine 276, and serine 326 each carry phosphoserine. The interval glycine 267–alanine 408 is disordered. A Phosphothreonine modification is found at threonine 327. Low complexity predominate over residues threonine 354 to serine 381. Phosphoserine is present on residues serine 357 and serine 373. The span at proline 387–arginine 401 shows a compositional bias: basic residues. 7 LRR repeats span residues tryptophan 487 to leucine 507, alanine 518 to leucine 530, phenylalanine 531 to isoleucine 555, serine 613 to valine 635, leucine 636 to cysteine 659, asparagine 701 to glutamate 728, and serine 731 to phenylalanine 752.

As to quaternary structure, part of an E3 ubiquitin-protein ligase complex with Elongin BC (ELOB and ELOC), RBX1 and CUL5. Component of a probable ECS(LRRC41) complex which contains CUL5, RNF7/RBX2, Elongin BC and LRRC41. Interacts with CUL5, RNF7, ELOB and ELOC.

Its pathway is protein modification; protein ubiquitination. Its function is as follows. Probable substrate recognition component of an ECS (Elongin BC-CUL2/5-SOCS-box protein) E3 ubiquitin ligase complex which mediates the ubiquitination and subsequent proteasomal degradation of target proteins. The polypeptide is Leucine-rich repeat-containing protein 41 (LRRC41) (Homo sapiens (Human)).